The following is a 176-amino-acid chain: Large ribosomal subunit protein uL22 (176 aa).

Residues 113-176 (VVESRPSKDQ…ETSEAKGGSD (64 aa)) form a disordered region. Residues 136-152 (SKAAATAPAKKSSASKA) are compositionally biased toward low complexity. A compositionally biased stretch (basic and acidic residues) spans 159–176 (TKAESKTSETSEAKGGSD).

Belongs to the universal ribosomal protein uL22 family. In terms of assembly, part of the 50S ribosomal subunit.

Functionally, this protein binds specifically to 23S rRNA; its binding is stimulated by other ribosomal proteins, e.g. L4, L17, and L20. It is important during the early stages of 50S assembly. It makes multiple contacts with different domains of the 23S rRNA in the assembled 50S subunit and ribosome. Its function is as follows. The globular domain of the protein is located near the polypeptide exit tunnel on the outside of the subunit, while an extended beta-hairpin is found that lines the wall of the exit tunnel in the center of the 70S ribosome. The sequence is that of Large ribosomal subunit protein uL22 from Mycobacterium marinum (strain ATCC BAA-535 / M).